The chain runs to 1311 residues: Ubiquitin carboxyl-terminal hydrolase 36 (1311 aa).

Low complexity-rich tracts occupy residues Ala120–Ser134 and Ser156–Ser174. Residues Ala120–Arg189 are disordered. One can recognise a USP domain in the interval Ala212 to Asp533. Catalysis depends on Cys221, which acts as the Nucleophile. The Proton acceptor role is filled by His492. Positions Asn546 to Val575 are disordered. A compositionally biased stretch (low complexity) spans Gln560–Gln572. At Ser581 the chain carries Phosphoserine. Disordered regions lie at residues Thr587–Gln620, Lys640–Asn1095, and Asp1136–Ser1311. Composition is skewed to low complexity over residues Thr605–Asn616, Ala660–Gln716, and Thr759–Thr774. Thr767 is modified (phosphothreonine). Residues Ser787 and Ser789 each carry the phosphoserine modification. Residues Ser795–Thr826 are compositionally biased toward low complexity. The segment covering Ala836–Val853 has biased composition (basic residues). The span at Pro869–Lys879 shows a compositional bias: polar residues. Residues Gln880–Phe889 are compositionally biased toward basic and acidic residues. A compositionally biased stretch (basic residues) spans Asn896–Gln905. Residues Gly910–Leu920 show a composition bias toward acidic residues. Low complexity-rich tracts occupy residues Asn925–Asn942 and Val950–Ala979. Residues Pro980–Pro989 are compositionally biased toward pro residues. Ser982 carries the post-translational modification Phosphoserine. A Phosphothreonine modification is found at Thr985. The residue at position 988 (Ser988) is a Phosphoserine. The segment covering Asp1006 to Glu1020 has biased composition (acidic residues). The span at Pro1037–Thr1050 shows a compositional bias: low complexity. At Ser1047 the chain carries Phosphoserine. At Thr1050 the chain carries Phosphothreonine. The segment covering Phe1060–Pro1081 has biased composition (polar residues). 2 stretches are compositionally biased toward low complexity: residues Val1154–Ala1176 and Thr1204–Asn1221. Over residues Gln1246–Asn1255 the composition is skewed to polar residues. Residues Gly1267–Gly1276 show a composition bias toward gly residues.

It belongs to the peptidase C19 family. As to quaternary structure, interacts with atms/PAF1, but not with CycT.

It localises to the nucleus. Its subcellular location is the nucleolus. It carries out the reaction Thiol-dependent hydrolysis of ester, thioester, amide, peptide and isopeptide bonds formed by the C-terminal Gly of ubiquitin (a 76-residue protein attached to proteins as an intracellular targeting signal).. In terms of biological role, required for maintaining multiple types of adult stem cells, including male and female germline, epithelial follicle cell and intestinal stem cells. May function as a transcriptional repressor by continually deubiquiting histone H2B at the promoters of genes critical for cellular differentiation, thereby preventing histone H3 'Lys-4' trimethylation (H3K4). Controls selective autophagy activation by ubiquitinated proteins. The sequence is that of Ubiquitin carboxyl-terminal hydrolase 36 (Usp36) from Drosophila willistoni (Fruit fly).